A 326-amino-acid chain; its full sequence is Intracellular serine protease (326 aa).

The region spanning 23–303 (PRGVEMIQAP…NGLLYLTAVE (281 aa)) is the Peptidase S8 domain. Active-site charge relay system residues include Asp49, His86, and Ser244.

This sequence belongs to the peptidase S8 family.

In terms of biological role, involved in the generation of beta- and alpha-amylases from the large amylase precursor. The sequence is that of Intracellular serine protease (isp) from Paenibacillus polymyxa (Bacillus polymyxa).